The following is a 161-amino-acid chain: Allophycocyanin subunit alpha 1 (161 aa).

The residue at position 71 (Asn-71) is an N4-methylasparagine. Position 81 (Cys-81) interacts with (2R,3E)-phycocyanobilin.

The protein belongs to the phycobiliprotein family. As to quaternary structure, heterohexamer of two alpha chains, one alpha-B chain and three beta chains. In terms of processing, contains one covalently linked phycocyanobilin chromophore. The chromophore is added by phycocyanobilin lyase CpcS 1.

It is found in the cellular thylakoid membrane. Its function is as follows. Light-harvesting photosynthetic bile pigment-protein from the phycobiliprotein complex. Allophycocyanin has a maximum absorption at approximately 650 to 653 nanometers. In Nostoc sp. (strain PCC 7120 / SAG 25.82 / UTEX 2576), this protein is Allophycocyanin subunit alpha 1 (apcA1).